A 318-amino-acid polypeptide reads, in one-letter code: Malonyl-S-ACP:biotin-protein carboxyltransferase MADC (318 aa).

The CoA carboxyltransferase N-terminal domain occupies 2-257; it reads AKWTELQDKS…VLQKPMEEIE (256 aa).

The protein resides in the cytoplasm. The enzyme catalyses N(6)-biotinyl-L-lysyl-[protein] + malonyl-[ACP] = N(6)-carboxybiotinyl-L-lysyl-[protein] + acetyl-[ACP]. In terms of biological role, gamma subunit of the biotin-dependent malonate decarboxylase multienzyme complex (EC 7.2.4.4). The two subunits MADC and MADD are required for the transfer of the malonate carboxy group from the acyl-carrier protein (ACP) to the prosthetic group of the biotin carrier MADF. Required for the regeneration of ACP. This chain is Malonyl-S-ACP:biotin-protein carboxyltransferase MADC (madC), found in Malonomonas rubra.